The sequence spans 193 residues: MTVSTAPLLSASGLAILRGERVLFRGIGLTLQPGEAIVLRGANGAGKTTLLRMLAGLTRPEAGEIARPAAHHWIGHKEGIKPQETPRIHLALWAKAWGSSASIADILDQLALTRAADVPGRYLSAGQRRRTAFARLLLEARPLWLLDEPYTALDAAGKTMLDQVISGHLRTGGAIIASMHDAAGFPVTAEVTL.

The ABC transporter domain maps to 9-191; sequence LSASGLAILR…AAGFPVTAEV (183 aa). 41–48 serves as a coordination point for ATP; sequence GANGAGKT.

This sequence belongs to the ABC transporter superfamily. CcmA exporter (TC 3.A.1.107) family. As to quaternary structure, the complex is composed of two ATP-binding proteins (CcmA) and two transmembrane proteins (CcmB).

The protein localises to the cell inner membrane. It catalyses the reaction heme b(in) + ATP + H2O = heme b(out) + ADP + phosphate + H(+). In terms of biological role, part of the ABC transporter complex CcmAB involved in the biogenesis of c-type cytochromes; once thought to export heme, this seems not to be the case, but its exact role is uncertain. Responsible for energy coupling to the transport system. This Hyphomonas neptunium (strain ATCC 15444) protein is Cytochrome c biogenesis ATP-binding export protein CcmA.